The chain runs to 537 residues: Glutamyl-tRNA reductase, chloroplastic (537 aa).

The transit peptide at 1 to 48 (MMASTTSATAAGGAFAAAKTRAGSSAAGGGACARVAAGGRRRSGVVVR) directs the protein to the chloroplast. Substrate-binding positions include 134–137 (TCNR), serine 194, 199–201 (EGQ), and glutamine 205. The active-site Nucleophile is the cysteine 135. 276–281 (GAGKMG) contributes to the NADP(+) binding site.

This sequence belongs to the glutamyl-tRNA reductase family.

The protein resides in the plastid. It is found in the chloroplast. It catalyses the reaction (S)-4-amino-5-oxopentanoate + tRNA(Glu) + NADP(+) = L-glutamyl-tRNA(Glu) + NADPH + H(+). It participates in porphyrin-containing compound metabolism; protoporphyrin-IX biosynthesis; 5-aminolevulinate from L-glutamyl-tRNA(Glu): step 1/2. Catalyzes the NADPH-dependent reduction of glutamyl-tRNA(Glu) to glutamate 1-semialdehyde (GSA). The polypeptide is Glutamyl-tRNA reductase, chloroplastic (Oryza sativa subsp. indica (Rice)).